A 251-amino-acid polypeptide reads, in one-letter code: 2,3-bisphosphoglycerate-dependent phosphoglycerate mutase (251 aa).

Residues 8-15 (RHGESLWN), 21-22 (TG), arginine 60, 87-90 (ERHY), lysine 98, 114-115 (RR), and 183-184 (GN) contribute to the substrate site. Histidine 9 functions as the Tele-phosphohistidine intermediate in the catalytic mechanism. Glutamate 87 serves as the catalytic Proton donor/acceptor.

This sequence belongs to the phosphoglycerate mutase family. BPG-dependent PGAM subfamily.

It carries out the reaction (2R)-2-phosphoglycerate = (2R)-3-phosphoglycerate. The protein operates within carbohydrate degradation; glycolysis; pyruvate from D-glyceraldehyde 3-phosphate: step 3/5. Catalyzes the interconversion of 2-phosphoglycerate and 3-phosphoglycerate. This is 2,3-bisphosphoglycerate-dependent phosphoglycerate mutase from Thermoanaerobacter sp. (strain X514).